The sequence spans 420 residues: ATP phosphoribosyltransferase regulatory subunit (420 aa).

This sequence belongs to the class-II aminoacyl-tRNA synthetase family. HisZ subfamily. As to quaternary structure, heteromultimer composed of HisG and HisZ subunits.

Its subcellular location is the cytoplasm. It participates in amino-acid biosynthesis; L-histidine biosynthesis; L-histidine from 5-phospho-alpha-D-ribose 1-diphosphate: step 1/9. Required for the first step of histidine biosynthesis. May allow the feedback regulation of ATP phosphoribosyltransferase activity by histidine. This is ATP phosphoribosyltransferase regulatory subunit from Bacillus mycoides (strain KBAB4) (Bacillus weihenstephanensis).